Here is a 1002-residue protein sequence, read N- to C-terminus: Chitin synthase II (1002 aa).

2 disordered regions span residues M1–S165 and L178–Q209. A compositionally biased stretch (low complexity) spans S63–V78. N123 carries N-linked (GlcNAc...) asparagine glycosylation. N336 is a glycosylation site (N-linked (GlcNAc...) asparagine). The next 8 membrane-spanning stretches (helical) occupy residues W627–A647, L669–G689, S704–L724, S740–V760, L780–E800, S808–C828, Y906–Y926, and I940–I960.

This sequence belongs to the chitin synthase family. Class II subfamily. Expressed in hyphal bodies.

Its subcellular location is the cell membrane. It catalyses the reaction [(1-&gt;4)-N-acetyl-beta-D-glucosaminyl](n) + UDP-N-acetyl-alpha-D-glucosamine = [(1-&gt;4)-N-acetyl-beta-D-glucosaminyl](n+1) + UDP + H(+). In terms of biological role, polymerizes chitin, a structural polymer of the cell wall and septum, by transferring the sugar moiety of UDP-GlcNAc to the non-reducing end of the growing chitin polymer. Contributes to the production of conidia and the ability of fungal conidia to germinate. Involved in fungal stress tolerances. This chain is Chitin synthase II, found in Metarhizium acridum (strain CQMa 102).